We begin with the raw amino-acid sequence, 509 residues long: MEEIHRYLQPDSSQQHNFLYPLIFQEYIYALAQDHGLNRNRSILLENSGYNNKFSFLIVKRLITRMYQQNHFIISTNDSNKNPFLGCNKSLYSQMISEGFACIVEIPFSIRLISSLSSFEGKKIFKSHNLRSIHSTFPFLEDNFSHLNYVLDILIPYPVHLEILVQTLRYWVKDASSLHLLRFFLHEYCNLNSLITSKKPGYSFSKKNQRFFFFLYNSYVYECESTFVFLRNQSSHLRSTSFGALLERIYFYGKIERLVEVFAKDFQVTLWLFKDPFMHYVRYEGKSILASKGTFPLMNKWKFYLVNFWQCHFSMYFHTGRIHINQLSNHSRDFMGYLSSVRLNHSMVRSQMLENSFLINNPIKKFETLVPIIPLIGSLAKAHFCTVLGHPISKPVWSDLSDSDIIDRFGRICRNLFHYYSGSSKKKTLYRIKYILRLSCARTLARKHKSTVRTFLKRSGSELLEEFLTSEEQVLSLTFPRASSSLWGVYRSRIWYLDIFCINDLANYQ.

Belongs to the intron maturase 2 family. MatK subfamily.

It is found in the plastid. It localises to the chloroplast. Functionally, usually encoded in the trnK tRNA gene intron. Probably assists in splicing its own and other chloroplast group II introns. This is Maturase K from Solanum bulbocastanum (Wild potato).